Reading from the N-terminus, the 214-residue chain is uncharacterized protein (214 aa).

The next 2 helical transmembrane spans lie at 23-43 (ILVG…VAAA) and 65-85 (VLYA…PVLL). A disordered region spans residues 96–115 (ATRPTGASVRGGRSIGSGHP). The next 2 membrane-spanning stretches (helical) occupy residues 152–172 (VVLT…TYLM) and 181–201 (WISY…EWLY).

It is found in the cell membrane. This is an uncharacterized protein from Mycobacterium tuberculosis (strain CDC 1551 / Oshkosh).